Here is a 315-residue protein sequence, read N- to C-terminus: Transaldolase (315 aa).

Lys125 serves as the catalytic Schiff-base intermediate with substrate.

This sequence belongs to the transaldolase family. Type 1 subfamily. Homodimer.

It localises to the cytoplasm. It carries out the reaction D-sedoheptulose 7-phosphate + D-glyceraldehyde 3-phosphate = D-erythrose 4-phosphate + beta-D-fructose 6-phosphate. The protein operates within carbohydrate degradation; pentose phosphate pathway; D-glyceraldehyde 3-phosphate and beta-D-fructose 6-phosphate from D-ribose 5-phosphate and D-xylulose 5-phosphate (non-oxidative stage): step 2/3. In terms of biological role, transaldolase is important for the balance of metabolites in the pentose-phosphate pathway. The chain is Transaldolase from Polaromonas sp. (strain JS666 / ATCC BAA-500).